The primary structure comprises 431 residues: Histidinol dehydrogenase (431 aa).

Residues Y129, Q191, and N214 each contribute to the NAD(+) site. 3 residues coordinate substrate: S237, Q259, and H262. Residues Q259 and H262 each coordinate Zn(2+). Residues E327 and H328 each act as proton acceptor in the active site. 4 residues coordinate substrate: H328, D361, E415, and H420. D361 provides a ligand contact to Zn(2+). H420 serves as a coordination point for Zn(2+).

It belongs to the histidinol dehydrogenase family. Requires Zn(2+) as cofactor.

It carries out the reaction L-histidinol + 2 NAD(+) + H2O = L-histidine + 2 NADH + 3 H(+). It functions in the pathway amino-acid biosynthesis; L-histidine biosynthesis; L-histidine from 5-phospho-alpha-D-ribose 1-diphosphate: step 9/9. Its function is as follows. Catalyzes the sequential NAD-dependent oxidations of L-histidinol to L-histidinaldehyde and then to L-histidine. The chain is Histidinol dehydrogenase (hisD) from Lactococcus lactis subsp. lactis (strain IL1403) (Streptococcus lactis).